Here is a 217-residue protein sequence, read N- to C-terminus: Leucyl/phenylalanyl-tRNA--protein transferase (217 aa).

This sequence belongs to the L/F-transferase family.

It is found in the cytoplasm. It catalyses the reaction N-terminal L-lysyl-[protein] + L-leucyl-tRNA(Leu) = N-terminal L-leucyl-L-lysyl-[protein] + tRNA(Leu) + H(+). The catalysed reaction is N-terminal L-arginyl-[protein] + L-leucyl-tRNA(Leu) = N-terminal L-leucyl-L-arginyl-[protein] + tRNA(Leu) + H(+). The enzyme catalyses L-phenylalanyl-tRNA(Phe) + an N-terminal L-alpha-aminoacyl-[protein] = an N-terminal L-phenylalanyl-L-alpha-aminoacyl-[protein] + tRNA(Phe). In terms of biological role, functions in the N-end rule pathway of protein degradation where it conjugates Leu, Phe and, less efficiently, Met from aminoacyl-tRNAs to the N-termini of proteins containing an N-terminal arginine or lysine. This is Leucyl/phenylalanyl-tRNA--protein transferase from Caulobacter vibrioides (strain ATCC 19089 / CIP 103742 / CB 15) (Caulobacter crescentus).